Reading from the N-terminus, the 72-residue chain is DNA-directed RNA polymerase subunit Rpo10 (72 aa).

Zn(2+) is bound by residues C7, C10, C53, and C54.

Belongs to the archaeal Rpo10/eukaryotic RPB10 RNA polymerase subunit family. Part of the RNA polymerase complex. Zn(2+) serves as cofactor.

The protein resides in the cytoplasm. It catalyses the reaction RNA(n) + a ribonucleoside 5'-triphosphate = RNA(n+1) + diphosphate. DNA-dependent RNA polymerase (RNAP) catalyzes the transcription of DNA into RNA using the four ribonucleoside triphosphates as substrates. The polypeptide is DNA-directed RNA polymerase subunit Rpo10 (Thermoplasma volcanium (strain ATCC 51530 / DSM 4299 / JCM 9571 / NBRC 15438 / GSS1)).